The primary structure comprises 375 residues: Matrix protein (375 aa).

The protein belongs to the morbillivirus/respirovirus/rubulavirus M protein family.

The protein localises to the virion. The M protein has a crucial role in virus assembly and interacts with the RNP complex as well as with the viral membrane. The sequence is that of Matrix protein (M) from Homo sapiens (Human).